Consider the following 613-residue polypeptide: YTH domain-containing family protein 2 (613 aa).

3 disordered regions span residues 1–43 (MSAS…AQPR), 215–234 (SQVSTAPTMPPASMAPAKTA), and 244–396 (AKPQ…TVPA). The interval 2 to 397 (SASSLLEQRP…GMGGITVPAE (396 aa)) is localization to mRNA processing bodies (P-bodies). The segment covering 16 to 27 (NKVQNGAVTQKD) has biased composition (polar residues). 3 stretches are compositionally biased toward low complexity: residues 218-234 (STAPTMPPASMAPAKTA), 295-307 (NGQPPNQSSPQPG), and 345-360 (PPQLSQGPPASQPSQP). The interaction with m6A-containing mRNAs stretch occupies residues 398-613 (PHPVLEKLRM…RMQDRQGRVK (216 aa)). Residues 423-557 (GRVFIIKSYS…DKARQVLKII (135 aa)) form the YTH domain. Residues 429 to 431 (KSY), Asp-435, 445 to 446 (WC), Asn-475, Trp-499, and Trp-504 each bind RNA. 2 stretches are compositionally biased toward basic and acidic residues: residues 578-587 (EEEESVKKVE) and 604-613 (RMQDRQGRVK). Positions 578–613 (EEEESVKKVEVQGSDPYSNNSSRSHYRMQDRQGRVK) are disordered.

It belongs to the YTHDF family. YTHDF2 subfamily.

The protein localises to the cytoplasm. The protein resides in the cytosol. It localises to the P-body. Its subcellular location is the stress granule. It is found in the nucleus. In terms of biological role, specifically recognizes and binds N6-methyladenosine (m6A)-containing RNAs, and regulates their stability. M6A is a modification present at internal sites of mRNAs and some non-coding RNAs and plays a role in mRNA stability and processing. Acts as a regulator of mRNA stability by promoting degradation of m6A-containing mRNAs. The YTHDF paralogs (ythdf1, ythdf2 and ythdf3) share m6A-containing mRNAs targets and act redundantly to mediate mRNA degradation and cellular differentiation. Plays a key role in maternal-to-zygotic transition during early embryonic development, the process during which maternally inherited mRNAs are degraded: acts by binding m6A-containing maternal mRNAs and promoting their degradation. More than one-third of maternal mRNAs can be modified by m6A. Binding to m6A-containing mRNAs results in mRNA degradation. Also involved in hematopoietic stem cells specification by binding to m6A-containing mRNAs, such as notch1a, and promote their degradation. The decreased Notch signaling following notch1a degradation promotes endothelial to hematopoietic transition. Promotes formation of phase-separated membraneless compartments, such as P-bodies or stress granules, by undergoing liquid-liquid phase separation upon binding to mRNAs containing multiple m6A-modified residues: polymethylated mRNAs act as a multivalent scaffold for the binding of YTHDF proteins, juxtaposing their disordered regions and thereby leading to phase separation. The resulting mRNA-YTHDF complexes then partition into different endogenous phase-separated membraneless compartments, such as P-bodies, stress granules or neuronal RNA granules. In Danio rerio (Zebrafish), this protein is YTH domain-containing family protein 2.